The following is a 425-amino-acid chain: 26S proteasome regulatory subunit 7 (425 aa).

ATP is bound at residue 208–215 (GPPGTGKT).

Belongs to the AAA ATPase family.

The protein resides in the cytoplasm. Its subcellular location is the nucleus. Its function is as follows. The 26S proteasome is involved in the ATP-dependent degradation of ubiquitinated proteins. The regulatory (or ATPase) complex confers ATP dependency and substrate specificity to the 26S complex. This chain is 26S proteasome regulatory subunit 7 (RPT1), found in Prunus persica (Peach).